Consider the following 164-residue polypeptide: Endoribonuclease YbeY (164 aa).

Zn(2+) contacts are provided by His120, His124, and His130.

The protein belongs to the endoribonuclease YbeY family. Zn(2+) is required as a cofactor.

It is found in the cytoplasm. Functionally, single strand-specific metallo-endoribonuclease involved in late-stage 70S ribosome quality control and in maturation of the 3' terminus of the 16S rRNA. This Acidothermus cellulolyticus (strain ATCC 43068 / DSM 8971 / 11B) protein is Endoribonuclease YbeY.